The chain runs to 502 residues: Protein O-glucosyltransferase 2 (502 aa).

Residues methionine 1–alanine 19 form the signal peptide. The Filamin repeat unit spans residues glutamate 24–glycine 130. Residues asparagine 302 and asparagine 414 are each glycosylated (N-linked (GlcNAc...) asparagine). Positions lysine 499 to leucine 502 match the Prevents secretion from ER motif.

This sequence belongs to the KDELC family. N-glycosylated.

Its subcellular location is the endoplasmic reticulum lumen. It carries out the reaction L-seryl-[EGF-like domain protein] + UDP-alpha-D-glucose = 3-O-(beta-D-glucosyl)-L-seryl-[EGF-like domain protein] + UDP + H(+). It catalyses the reaction L-seryl-[EGF-like domain protein] + UDP-alpha-D-xylose = 3-O-(beta-D-xylosyl)-L-seryl-[EGF-like domain protein] + UDP + H(+). Its pathway is protein modification; protein glycosylation. Protein glucosyltransferase that catalyzes the transfer of glucose from UDP-glucose to a serine residue within the consensus sequence peptide C-X-N-T-X-G-S-F-X-C. Can also catalyze the transfer of xylose from UDP-xylose but less efficiently. Specifically targets extracellular EGF repeats of proteins such as NOTCH1, NOTCH3, FBN1, FBN2 and LTBP1. May regulate the transport of NOTCH1 and NOTCH3 to the plasma membrane and thereby the Notch signaling pathway. The protein is Protein O-glucosyltransferase 2 of Homo sapiens (Human).